Reading from the N-terminus, the 284-residue chain is Release factor glutamine methyltransferase (284 aa).

S-adenosyl-L-methionine is bound by residues 121–125 (GTGTG), Asp-144, Trp-172, and Asn-188. 188–191 (NPPY) is a binding site for substrate.

This sequence belongs to the protein N5-glutamine methyltransferase family. PrmC subfamily.

It catalyses the reaction L-glutaminyl-[peptide chain release factor] + S-adenosyl-L-methionine = N(5)-methyl-L-glutaminyl-[peptide chain release factor] + S-adenosyl-L-homocysteine + H(+). Functionally, methylates the class 1 translation termination release factors RF1/PrfA and RF2/PrfB on the glutamine residue of the universally conserved GGQ motif. The chain is Release factor glutamine methyltransferase from Aliivibrio fischeri (strain ATCC 700601 / ES114) (Vibrio fischeri).